The primary structure comprises 308 residues: uncharacterized protein (308 aa).

Residues 1–28 form the signal peptide; that stretch reads MILMKKFEIILFLFIAVLIFVFGYFVGA.

This is an uncharacterized protein from Methanocaldococcus jannaschii (strain ATCC 43067 / DSM 2661 / JAL-1 / JCM 10045 / NBRC 100440) (Methanococcus jannaschii).